We begin with the raw amino-acid sequence, 132 residues long: Small ribosomal subunit protein uS8c (132 aa).

The protein belongs to the universal ribosomal protein uS8 family. Part of the 30S ribosomal subunit.

It localises to the plastid. The protein resides in the chloroplast. One of the primary rRNA binding proteins, it binds directly to 16S rRNA central domain where it helps coordinate assembly of the platform of the 30S subunit. This chain is Small ribosomal subunit protein uS8c (rps8), found in Liriodendron tulipifera (Tuliptree).